We begin with the raw amino-acid sequence, 287 residues long: Damage-control phosphatase PH1575 (287 aa).

The Subfamily I CxxC motif motif lies at 7-10 (CLTC). 3 residues coordinate Mn(2+): D156, N157, and D191. Residues 243–246 (GNFE) carry the Subfamily I GNFE motif motif. The short motif at 263-264 (KC) is the Subfamily I KC motif element.

Belongs to the damage-control phosphatase family. Nucleotides phosphatase I subfamily. Mn(2+) is required as a cofactor. It depends on Ni(2+) as a cofactor. [2Fe-2S] cluster serves as cofactor.

Activity is strongly promoted by Co(2+), Ni(2+), Mg(2+), Mn(2+), Ca(2+), Zn(2+) and Cu(2+). Activity is inhibited by EDTA. In terms of biological role, metal-dependent phosphatase with probable damage-control functions. Shows phosphatase activity against p-nitrophenyl phosphate (pNPP), but natural substrates have not been identified yet. Low phosphatase activity against 8-oxo nucleotides suggests that it could hydrolyze oxidatively damaged purine nucleotides or their biosynthetic intermediates. The chain is Damage-control phosphatase PH1575 from Pyrococcus horikoshii (strain ATCC 700860 / DSM 12428 / JCM 9974 / NBRC 100139 / OT-3).